The sequence spans 283 residues: Extracellular metalloprotease MGG_08041 (283 aa).

The N-terminal stretch at 1-22 (MQINVVKTFLFALAASSVSALA) is a signal peptide. Asparagine 55 is a glycosylation site (N-linked (GlcNAc...) asparagine). Histidine 197 contributes to the Zn(2+) binding site. Glutamate 198 is a catalytic residue. Histidine 201 lines the Zn(2+) pocket. Cysteines 233 and 260 form a disulfide.

Belongs to the peptidase M43B family.

It is found in the secreted. In terms of biological role, secreted metalloproteinase that allows assimilation of proteinaceous substrates. This Pyricularia oryzae (strain 70-15 / ATCC MYA-4617 / FGSC 8958) (Rice blast fungus) protein is Extracellular metalloprotease MGG_08041.